The following is a 260-amino-acid chain: Intermembrane phospholipid transport system permease protein MlaE (260 aa).

The Cytoplasmic segment spans residues 1–50 (MLLNALASLGHKGIKTLRTFGRAGLMLFNALVGKPEFRKHAPLLVRQLYN). The helical transmembrane segment at 51-71 (VGVLSMLIIVVSGVFIGMVLG) threads the bilayer. Over 72–88 (LQGYLVLTTYSAETSLG) the chain is Periplasmic. Residues 89–109 (MLVALSLLRELGPVVAALLFA) traverse the membrane as a helical segment. Over 110–147 (GRAGSALTAEIGLMRATEQLSSMEMMAVDPLRRVISPR) the chain is Cytoplasmic. A helical transmembrane segment spans residues 148–168 (FWAGVISLPLLTVIFVAVGIW). Over 169–198 (GGSLVGVSWKGIDSGFFWSAMQNAVDWRMD) the chain is Periplasmic. A helical membrane pass occupies residues 199–219 (LVNCLIKSVVFAITVTWISLF). At 220-238 (NGYDAIPTSAGISRATTRT) the chain is on the cytoplasmic side. A helical transmembrane segment spans residues 239-259 (VVHSSLAVLGLDFVLTALMFG). Position 260 (N260) is a topological domain, periplasmic.

This sequence belongs to the MlaE permease family. As to quaternary structure, the complex is composed of two ATP-binding proteins (MlaF), two transmembrane proteins (MlaE), two cytoplasmic solute-binding proteins (MlaB) and six periplasmic solute-binding proteins (MlaD).

The protein resides in the cell inner membrane. Functionally, part of the ABC transporter complex MlaFEDB, which is involved in a phospholipid transport pathway that maintains lipid asymmetry in the outer membrane by retrograde trafficking of phospholipids from the outer membrane to the inner membrane. Probably responsible for the translocation of the substrate across the membrane. In Escherichia coli O157:H7, this protein is Intermembrane phospholipid transport system permease protein MlaE.